Reading from the N-terminus, the 545-residue chain is CTP synthase (545 aa).

Positions 1–266 (MTKNYIFITG…DDYICNYFKL (266 aa)) are amidoligase domain. A CTP-binding site is contributed by Ser-14. Residue Ser-14 coordinates UTP. Residues 15-20 (SLGKGI) and Asp-72 contribute to the ATP site. Mg(2+) is bound by residues Asp-72 and Glu-140. CTP-binding positions include 147 to 149 (DIE), 187 to 192 (KTKPTQ), and Lys-223. UTP-binding positions include 187-192 (KTKPTQ) and Lys-223. 239-241 (KDV) provides a ligand contact to ATP. The Glutamine amidotransferase type-1 domain maps to 291 to 543 (VIGIIGKYIK…IKSAGKHKKN (253 aa)). Gly-352 serves as a coordination point for L-glutamine. Cys-379 functions as the Nucleophile; for glutamine hydrolysis in the catalytic mechanism. L-glutamine contacts are provided by residues 380-383 (LGMQ), Glu-403, and Arg-471. Active-site residues include His-516 and Glu-518.

The protein belongs to the CTP synthase family. As to quaternary structure, homotetramer.

It catalyses the reaction UTP + L-glutamine + ATP + H2O = CTP + L-glutamate + ADP + phosphate + 2 H(+). It carries out the reaction L-glutamine + H2O = L-glutamate + NH4(+). The catalysed reaction is UTP + NH4(+) + ATP = CTP + ADP + phosphate + 2 H(+). The protein operates within pyrimidine metabolism; CTP biosynthesis via de novo pathway; CTP from UDP: step 2/2. Its activity is regulated as follows. Allosterically activated by GTP, when glutamine is the substrate; GTP has no effect on the reaction when ammonia is the substrate. The allosteric effector GTP functions by stabilizing the protein conformation that binds the tetrahedral intermediate(s) formed during glutamine hydrolysis. Inhibited by the product CTP, via allosteric rather than competitive inhibition. In terms of biological role, catalyzes the ATP-dependent amination of UTP to CTP with either L-glutamine or ammonia as the source of nitrogen. Regulates intracellular CTP levels through interactions with the four ribonucleotide triphosphates. The sequence is that of CTP synthase from Buchnera aphidicola subsp. Acyrthosiphon pisum (strain 5A).